The following is a 338-amino-acid chain: DNA-directed RNA polymerase subunit alpha (338 aa).

Residues methionine 1–asparagine 226 are alpha N-terminal domain (alpha-NTD). An alpha C-terminal domain (alpha-CTD) region spans residues tyrosine 243–tyrosine 338. The segment at alanine 319–tyrosine 338 is disordered. Over residues alanine 323–tyrosine 338 the composition is skewed to acidic residues.

It belongs to the RNA polymerase alpha chain family. Homodimer. The RNAP catalytic core consists of 2 alpha, 1 beta, 1 beta' and 1 omega subunit. When a sigma factor is associated with the core the holoenzyme is formed, which can initiate transcription.

The enzyme catalyses RNA(n) + a ribonucleoside 5'-triphosphate = RNA(n+1) + diphosphate. Functionally, DNA-dependent RNA polymerase catalyzes the transcription of DNA into RNA using the four ribonucleoside triphosphates as substrates. The sequence is that of DNA-directed RNA polymerase subunit alpha from Cutibacterium acnes (strain DSM 16379 / KPA171202) (Propionibacterium acnes).